A 231-amino-acid chain; its full sequence is Protein C activator (231 aa).

In terms of domain architecture, Peptidase S1 spans 1-222; the sequence is VIGGDECNIN…YTDWIQSIIS (222 aa). 6 disulfides stabilise this stretch: C7–C138, C25–C41, C73–C229, C117–C183, C149–C162, and C173–C198. An N-linked (GlcNAc...) asparagine glycan is attached at N21. The Charge relay system role is filled by H40. N78 carries N-linked (GlcNAc...) asparagine glycosylation. D85 acts as the Charge relay system in catalysis. N129 carries an N-linked (GlcNAc...) asparagine glycan. The Charge relay system role is filled by S177.

This sequence belongs to the peptidase S1 family. Snake venom subfamily. In terms of assembly, monomer. Expressed by the venom gland.

It is found in the secreted. Snake venom serine protease that selectively cleaves the heavy chain of protein C (PROC). This activation is thrombomodulin-independent. In Agkistrodon contortrix contortrix (Southern copperhead), this protein is Protein C activator.